The chain runs to 221 residues: Large ribosomal subunit protein uL4 (221 aa).

Residues 56–83 are disordered; it reads HATKTRGMVSGGGRKPWKQKGTGRARQG.

It belongs to the universal ribosomal protein uL4 family. Part of the 50S ribosomal subunit.

One of the primary rRNA binding proteins, this protein initially binds near the 5'-end of the 23S rRNA. It is important during the early stages of 50S assembly. It makes multiple contacts with different domains of the 23S rRNA in the assembled 50S subunit and ribosome. Its function is as follows. Forms part of the polypeptide exit tunnel. The sequence is that of Large ribosomal subunit protein uL4 from Bifidobacterium adolescentis (strain ATCC 15703 / DSM 20083 / NCTC 11814 / E194a).